We begin with the raw amino-acid sequence, 855 residues long: Vomeronasal type-2 receptor 26 (855 aa).

An N-terminal signal peptide occupies residues 1–22; sequence MKLLTAFSPLVVLILFQEQISC. Residues 23-595 are Extracellular-facing; it reads YYLTKYASSG…FLAHEDPLGT (573 aa). 2 N-linked (GlcNAc...) asparagine glycosylation sites follow: asparagine 101 and asparagine 295. Residues 596-616 traverse the membrane as a helical segment; it reads VLVSLAISLSAFSAMILGLFI. Topologically, residues 617 to 630 are cytoplasmic; that stretch reads CYRETPIVRANNRN. A helical transmembrane segment spans residues 631–651; sequence LSYLLLISLKLCFSCSLMFIG. At 652-662 the chain is on the extracellular side; sequence QPRTVTCVLRQ. A helical transmembrane segment spans residues 663-683; that stretch reads IIFGIVFSIVISAILAKTFIV. The Cytoplasmic segment spans residues 684–706; sequence VMAFKAIKPGSILKMGMVTRLSN. Residues 707 to 727 traverse the membrane as a helical segment; that stretch reads AIVCCGSIIQVCICAVWLGTY. Topologically, residues 728–753 are extracellular; it reads PPFPDVDMHSEFGQIILWCNEGSTLA. A helical transmembrane segment spans residues 754–774; sequence FYCVLGYLGFLASLSLLIAFL. At 775–786 the chain is on the cytoplasmic side; the sequence is ARRLPDSFNEAK. Residues 787–807 form a helical membrane-spanning segment; it reads TITFSMLVFCSVWISFVPAYL. Over 808–814 the chain is Extracellular; that stretch reads SSKGKTM. A helical transmembrane segment spans residues 815 to 835; sequence VAVEILSILASSAGLLGCIFL. Topologically, residues 836–855 are cytoplasmic; the sequence is PKCYVILLKSGGHSRKKFFK.

It belongs to the G-protein coupled receptor 3 family. In terms of tissue distribution, expressed in the basal epithelium of the vomeronasal organ. Located to vomeronasal sensory neurons that project their axons to six to ten glomeruli that reside in globally conserved areas within the caudal accessory olfactory bulb (AOB).

It localises to the cell membrane. In terms of biological role, putative pheromone receptor. The chain is Vomeronasal type-2 receptor 26 (Vmn2r26) from Mus musculus (Mouse).